A 197-amino-acid polypeptide reads, in one-letter code: MLESVKANFTESIQTMIASLEELPEPIALATQMMVNALINGNKILSCGNGGSAAHAQSFASQMLNRYERERPSLPAIALSTDTSTMTSIANDYSYDEVFSKQVRALGQTGDILLAISPNGASRSVISAMEAALSRDMTIVALTGLDGGEMAGLLGPNDVEIRVPSSRAVRIHEVHLLVIHNLCEGVDDCLFPETSQE.

One can recognise an SIS domain in the interval 34–192 (MVNALINGNK…CEGVDDCLFP (159 aa)). Substrate is bound by residues 49–51 (NGG), Gln62, 91–92 (ND), Ser122, and His172. Gln62 contacts Zn(2+). His172 and His180 together coordinate Zn(2+).

It belongs to the SIS family. GmhA subfamily. In terms of assembly, homotetramer. Zn(2+) is required as a cofactor.

The protein localises to the cytoplasm. It catalyses the reaction 2 D-sedoheptulose 7-phosphate = D-glycero-alpha-D-manno-heptose 7-phosphate + D-glycero-beta-D-manno-heptose 7-phosphate. The protein operates within carbohydrate biosynthesis; D-glycero-D-manno-heptose 7-phosphate biosynthesis; D-glycero-alpha-D-manno-heptose 7-phosphate and D-glycero-beta-D-manno-heptose 7-phosphate from sedoheptulose 7-phosphate: step 1/1. Its function is as follows. Catalyzes the isomerization of sedoheptulose 7-phosphate in D-glycero-D-manno-heptose 7-phosphate. The sequence is that of Phosphoheptose isomerase from Pseudoalteromonas atlantica (strain T6c / ATCC BAA-1087).